We begin with the raw amino-acid sequence, 465 residues long: COP9 signalosome complex subunit 5 (465 aa).

Residues Val-74–Gln-216 enclose the MPN domain. His-162, His-164, and Asp-175 together coordinate Zn(2+). The JAMM motif signature appears at His-162–Asp-175. Residues Ser-364–His-386 form a disordered region.

It belongs to the peptidase M67A family. CSN5 subfamily. As to quaternary structure, component of the COP9 signalosome (CSN) complex.

It localises to the cytoplasm. Its subcellular location is the nucleus. Its function is as follows. Catalytic Component of the COP9 signalosome (CSN) complex that acts as an regulator of the ubiquitin (Ubl) conjugation pathway by mediating the deneddylation of the cullin subunit of SCF-type E3 ubiquitin-protein ligase complexes. The sequence is that of COP9 signalosome complex subunit 5 (RRI1) from Candida glabrata (strain ATCC 2001 / BCRC 20586 / JCM 3761 / NBRC 0622 / NRRL Y-65 / CBS 138) (Yeast).